We begin with the raw amino-acid sequence, 106 residues long: UPF0473 protein LCABL_08490 (106 aa).

Belongs to the UPF0473 family.

The chain is UPF0473 protein LCABL_08490 from Lacticaseibacillus casei (strain BL23) (Lactobacillus casei).